Here is a 369-residue protein sequence, read N- to C-terminus: MIAILLAVAFGITFTLFTTPFFIRLFRKIGWGQFIRLDGPRQHAIKRGTPTMGGLVIVVASIISYFLANFFLGLSVEPSGLLVIFMFVGMSLVGFLDDILKVRKQHSGGLGPFYKVVLQSFIAVPFALLTFLVKDARGIPHSSMSISFARDTGINFSALFSLGIIGVFSAWILYLLWINLIAVSSVNAVNITDGLDGLAAGAMIFTMLAYVVIGFWQSGQNCARKSLPLENISKCYSVNGPLDMSILAAAILGSLLGFLWWNTNPSKIMMGDTGALALGGAAAALSILTHTQLLFLVLGGLFVIEAGSVILQIAFYKKYRRRIFLMSPLHHHFELKGWAEITVVVRFWIIAGLFTALGIGLFYADWLYS.

10 helical membrane-spanning segments follow: residues 2–22 (IAIL…TPFF), 54–74 (GLVI…FLGL), 80–100 (GLLV…DDIL), 113–133 (FYKV…TFLV), 158–178 (ALFS…LLWI), 195–215 (LDGL…VIGF), 241–261 (PLDM…FLWW), 268–288 (IMMG…LSIL), 293–313 (LLFL…ILQI), and 347–367 (FWII…ADWL).

It belongs to the glycosyltransferase 4 family. MraY subfamily. The cofactor is Mg(2+).

It localises to the cell membrane. The enzyme catalyses UDP-N-acetyl-alpha-D-muramoyl-L-alanyl-gamma-D-glutamyl-meso-2,6-diaminopimeloyl-D-alanyl-D-alanine + di-trans,octa-cis-undecaprenyl phosphate = di-trans,octa-cis-undecaprenyl diphospho-N-acetyl-alpha-D-muramoyl-L-alanyl-D-glutamyl-meso-2,6-diaminopimeloyl-D-alanyl-D-alanine + UMP. The protein operates within cell wall biogenesis; peptidoglycan biosynthesis. Catalyzes the initial step of the lipid cycle reactions in the biosynthesis of the cell wall peptidoglycan: transfers peptidoglycan precursor phospho-MurNAc-pentapeptide from UDP-MurNAc-pentapeptide onto the lipid carrier undecaprenyl phosphate, yielding undecaprenyl-pyrophosphoryl-MurNAc-pentapeptide, known as lipid I. This Tropheryma whipplei (strain Twist) (Whipple's bacillus) protein is Phospho-N-acetylmuramoyl-pentapeptide-transferase.